A 417-amino-acid polypeptide reads, in one-letter code: Cobalamin binding intrinsic factor (417 aa).

An N-terminal signal peptide occupies residues 1-18; that stretch reads MAWFALYLLSLLWATAGT. 3 cysteine pairs are disulfide-bonded: Cys26/Cys246, Cys103/Cys288, and Cys143/Cys182. Asp171 is a binding site for cob(II)alamin. Ser191 is modified (phosphoserine). Positions 222 and 270 each coordinate cob(II)alamin. Residues Asn311, Asn330, and Asn334 are each glycosylated (N-linked (GlcNAc...) asparagine). Cob(II)alamin contacts are provided by residues 365–370 and 386–395; these read SWGLVV and WQFLSGVTPL. A glycan (N-linked (GlcNAc...) asparagine) is linked at Asn413.

Belongs to the eukaryotic cobalamin transport proteins family. As to quaternary structure, interacts with CUBN (via CUB domains). Gastric mucosa.

It localises to the secreted. Promotes absorption of the essential vitamin cobalamin (Cbl) in the ileum. After interaction with CUBN, the CBLIF-cobalamin complex is internalized via receptor-mediated endocytosis. This Homo sapiens (Human) protein is Cobalamin binding intrinsic factor.